We begin with the raw amino-acid sequence, 437 residues long: MPVSRVKVKNRHLKKKTKKPLAFYKPATKFAGAVLIAGTLTTTHELLLQQTSPMVQAATNSSEVFIESIAASAKPVADANGLYPSVMIAQAILESNWGSSQLSRAPYYNLFGIQGTYQGKSVVFKTQEYLNGKWVTKDMPFRVYPSFNQSFQDNAYVLKTTNFGNGPYYAKAWRANAATYQDATAALTGRYATDPSYGASLNRIISQYNLTRFDGASSAGNTNSGGSTTTITNNNSGTNSSSTTYTVKSGDTLWGISQRYGISVAQIQSANNLKSTIIYIGQKLVLTGSASSTNSGGSNNSASTTPTTSVTPAKPTSQTTVKVKSGDTLWALSVKYKTSIAQLKSWNHLSSDTIYIGQNLIVSQSAAASNPSTGSGSTATNNSNSTSSNSNASIHKVVKGDTLWGLSQKSGSPIASIKAWNHLSSDTILIGQYLRIK.

A signal peptide spans 1-57 (MPVSRVKVKNRHLKKKTKKPLAFYKPATKFAGAVLIAGTLTTTHELLLQQTSPMVQA). Disordered regions lie at residues 217-244 (SSAG…SSTT), 290-320 (ASST…SQTT), and 367-392 (AASN…NSNA). One can recognise a LysM 1 domain in the interval 243–286 (TTYTVKSGDTLWGISQRYGISVAQIQSANNLKSTIIYIGQKLVL). Positions 290-317 (ASSTNSGGSNNSASTTPTTSVTPAKPTS) are enriched in low complexity. Positions 319-362 (TTVKVKSGDTLWALSVKYKTSIAQLKSWNHLSSDTIYIGQNLIV) constitute a LysM 2 domain. Residues 393 to 436 (SIHKVVKGDTLWGLSQKSGSPIASIKAWNHLSSDTILIGQYLRI) enclose the LysM 3 domain.

Belongs to the glycosyl hydrolase 73 family.

Its subcellular location is the secreted. The catalysed reaction is Hydrolysis of (1-&gt;4)-beta-linkages between N-acetylmuramic acid and N-acetyl-D-glucosamine residues in a peptidoglycan and between N-acetyl-D-glucosamine residues in chitodextrins.. Its function is as follows. Hydrolyzes the cell wall of L.lactis and M.lysodeikticus. Required for cell separation during growth. This is Probable N-acetylmuramidase (acmA) from Lactococcus lactis subsp. cremoris (strain MG1363).